A 367-amino-acid chain; its full sequence is Methionine aminopeptidase 1 (367 aa).

A C6H2-type zinc finger spans residues 3–57 (GILCASPGCGKPAKLQCPTCVNLKLETPSHFCSQECFKTFWPLHKMYHQKGQPEN). Cys-6, Cys-11, Cys-19, Cys-22, Cys-34, Cys-38, His-46, and His-50 together coordinate Zn(2+). His-185 provides a ligand contact to a protein. Zn(2+) contacts are provided by Asp-202, Asp-213, and His-276. A protein is bound at residue His-283. Glu-309 and Glu-340 together coordinate Zn(2+).

Belongs to the peptidase M24A family. Methionine aminopeptidase type 1 subfamily. Associates with the 60S ribosomal subunit of the 80S translational complex. Zn(2+) serves as cofactor. It depends on Co(2+) as a cofactor. The cofactor is Mn(2+). Fe(2+) is required as a cofactor.

It is found in the cytoplasm. The catalysed reaction is Release of N-terminal amino acids, preferentially methionine, from peptides and arylamides.. Cotranslationally removes the N-terminal methionine from nascent proteins. The N-terminal methionine is often cleaved when the second residue in the primary sequence is small and uncharged (Met-Ala-, Cys, Gly, Pro, Ser, Thr, or Val). The protein is Methionine aminopeptidase 1 (metap1) of Dictyostelium discoideum (Social amoeba).